A 367-amino-acid polypeptide reads, in one-letter code: Chorismate synthase (367 aa).

NADP(+)-binding residues include Arg48 and Arg54. FMN-binding positions include 125–127, 238–239, Gly278, 293–297, and Arg319; these read RSS, NA, and KPTSS.

It belongs to the chorismate synthase family. As to quaternary structure, homotetramer. It depends on FMNH2 as a cofactor.

The catalysed reaction is 5-O-(1-carboxyvinyl)-3-phosphoshikimate = chorismate + phosphate. Its pathway is metabolic intermediate biosynthesis; chorismate biosynthesis; chorismate from D-erythrose 4-phosphate and phosphoenolpyruvate: step 7/7. Functionally, catalyzes the anti-1,4-elimination of the C-3 phosphate and the C-6 proR hydrogen from 5-enolpyruvylshikimate-3-phosphate (EPSP) to yield chorismate, which is the branch point compound that serves as the starting substrate for the three terminal pathways of aromatic amino acid biosynthesis. This reaction introduces a second double bond into the aromatic ring system. The polypeptide is Chorismate synthase (Xanthomonas campestris pv. campestris (strain B100)).